Here is a 29-residue protein sequence, read N- to C-terminus: GLWSKIKDAGKAVLKAAGKAALGAVTDAV.

As to expression, expressed by the skin glands.

Its subcellular location is the secreted. In terms of biological role, has antimicrobial activity. This is Dermaseptin-9TR from Phyllomedusa trinitatis (Trinidad leaf frog).